Consider the following 467-residue polypeptide: Methylenetetrahydrofolate--tRNA-(uracil-5-)-methyltransferase TrmFO (467 aa).

11–16 (GAGLAG) lines the FAD pocket.

The protein belongs to the MnmG family. TrmFO subfamily. Requires FAD as cofactor.

Its subcellular location is the cytoplasm. The enzyme catalyses uridine(54) in tRNA + (6R)-5,10-methylene-5,6,7,8-tetrahydrofolate + NADH + H(+) = 5-methyluridine(54) in tRNA + (6S)-5,6,7,8-tetrahydrofolate + NAD(+). The catalysed reaction is uridine(54) in tRNA + (6R)-5,10-methylene-5,6,7,8-tetrahydrofolate + NADPH + H(+) = 5-methyluridine(54) in tRNA + (6S)-5,6,7,8-tetrahydrofolate + NADP(+). Its function is as follows. Catalyzes the folate-dependent formation of 5-methyl-uridine at position 54 (M-5-U54) in all tRNAs. This Prochlorococcus marinus (strain NATL2A) protein is Methylenetetrahydrofolate--tRNA-(uracil-5-)-methyltransferase TrmFO.